A 561-amino-acid polypeptide reads, in one-letter code: DNA ligase B (561 aa).

K125 (N6-AMP-lysine intermediate) is an active-site residue.

The protein belongs to the NAD-dependent DNA ligase family. LigB subfamily.

The catalysed reaction is NAD(+) + (deoxyribonucleotide)n-3'-hydroxyl + 5'-phospho-(deoxyribonucleotide)m = (deoxyribonucleotide)n+m + AMP + beta-nicotinamide D-nucleotide.. In terms of biological role, catalyzes the formation of phosphodiester linkages between 5'-phosphoryl and 3'-hydroxyl groups in double-stranded DNA using NAD as a coenzyme and as the energy source for the reaction. The polypeptide is DNA ligase B (Salmonella gallinarum (strain 287/91 / NCTC 13346)).